A 151-amino-acid polypeptide reads, in one-letter code: Putative pre-16S rRNA nuclease (151 aa).

The protein belongs to the YqgF nuclease family.

It localises to the cytoplasm. Its function is as follows. Could be a nuclease involved in processing of the 5'-end of pre-16S rRNA. This is Putative pre-16S rRNA nuclease from Neisseria meningitidis serogroup C (strain 053442).